We begin with the raw amino-acid sequence, 691 residues long: Seven transmembrane domain-containing tyrosine-protein kinase 1 (691 aa).

Residues 1-33 lie on the Extracellular side of the membrane; sequence MDTSCVSINQCGFCTYLFNRSIPLAGEGDGAIM. The helical transmembrane segment at 34–54 threads the bilayer; that stretch reads FNTMVDSMALGYIFSALYLLF. The Cytoplasmic portion of the chain corresponds to 55-126; sequence RLQRSYTYLQ…PRIINSTYFK (72 aa). The chain crosses the membrane as a helical span at residues 127–144; sequence YTLFVSLWLAFEGLLLLF. At 145–153 the chain is on the extracellular side; the sequence is LPPNSLAYP. Residues 154–176 form a helical membrane-spanning segment; the sequence is AFVIIVGTGHIVTDNWVLVFLYG. Residues 177 to 186 are Cytoplasmic-facing; that stretch reads KEDDRFSARR. The helical transmembrane segment at 187–207 threads the bilayer; sequence SFYSCTLLYLIICCTTLASFF. The Extracellular segment spans residues 208 to 227; sequence DDQTMCKKNDCQTFMFQDEY. Residues 228 to 248 form a helical membrane-spanning segment; the sequence is TSLAITVASLVVYTIVLGMTI. At 249 to 258 the chain is on the cytoplasmic side; sequence KRSFLRPTGR. The chain crosses the membrane as a helical span at residues 259 to 279; that stretch reads IWLLFLMGYNCISSVGALLNI. The Extracellular portion of the chain corresponds to 280-284; that stretch reads LDVDA. The helical transmembrane segment at 285 to 305 threads the bilayer; sequence GYCFLGIAAIIYSFSYGPLLF. Residues 306–691 lie on the Cytoplasmic side of the membrane; that stretch reads RTCGNDTNLL…GAEEFHYIDG (386 aa). The Protein kinase domain maps to 363 to 634; the sequence is FKFGQVIGEG…ANVPISNTYV (272 aa). ATP is bound by residues 369 to 377 and lysine 390; that span reads IGEGYFGEV. Aspartate 493 serves as the catalytic Proton acceptor.

This sequence belongs to the protein kinase superfamily. TKL Tyr protein kinase family.

The protein resides in the membrane. The catalysed reaction is L-tyrosyl-[protein] + ATP = O-phospho-L-tyrosyl-[protein] + ADP + H(+). This is Seven transmembrane domain-containing tyrosine-protein kinase 1 (7tmk1) from Dictyostelium discoideum (Social amoeba).